Reading from the N-terminus, the 572-residue chain is Phosphoenolpyruvate-protein phosphotransferase (572 aa).

H191 (tele-phosphohistidine intermediate) is an active-site residue. R298 and R334 together coordinate phosphoenolpyruvate. Mg(2+)-binding residues include E433 and D457. Residues N456 to D457 and R467 contribute to the phosphoenolpyruvate site. Residue C504 is the Proton donor of the active site.

The protein belongs to the PEP-utilizing enzyme family. Homodimer. Mg(2+) serves as cofactor.

The protein resides in the cytoplasm. The enzyme catalyses L-histidyl-[protein] + phosphoenolpyruvate = N(pros)-phospho-L-histidyl-[protein] + pyruvate. General (non sugar-specific) component of the phosphoenolpyruvate-dependent sugar phosphotransferase system (sugar PTS). This major carbohydrate active-transport system catalyzes the phosphorylation of incoming sugar substrates concomitantly with their translocation across the cell membrane. Enzyme I transfers the phosphoryl group from phosphoenolpyruvate (PEP) to the phosphoryl carrier protein (HPr). The polypeptide is Phosphoenolpyruvate-protein phosphotransferase (Staphylococcus aureus (strain MSSA476)).